The chain runs to 342 residues: S-adenosylmethionine:tRNA ribosyltransferase-isomerase (342 aa).

The protein belongs to the QueA family. As to quaternary structure, monomer.

The protein resides in the cytoplasm. It carries out the reaction 7-aminomethyl-7-carbaguanosine(34) in tRNA + S-adenosyl-L-methionine = epoxyqueuosine(34) in tRNA + adenine + L-methionine + 2 H(+). The protein operates within tRNA modification; tRNA-queuosine biosynthesis. Transfers and isomerizes the ribose moiety from AdoMet to the 7-aminomethyl group of 7-deazaguanine (preQ1-tRNA) to give epoxyqueuosine (oQ-tRNA). The protein is S-adenosylmethionine:tRNA ribosyltransferase-isomerase of Streptococcus pneumoniae serotype 4 (strain ATCC BAA-334 / TIGR4).